The sequence spans 409 residues: Tyrosine--tRNA ligase (409 aa).

An L-tyrosine-binding site is contributed by Y35. Positions 40 to 49 (CTAESLHVGS) match the 'HIGH' region motif. Residues Y172 and Q176 each contribute to the L-tyrosine site. The short motif at 232–236 (KMGKT) is the 'KMSKS' region element. K235 is an ATP binding site. The region spanning 343-409 (ISILDLVILS…KKKHIKVELI (67 aa)) is the S4 RNA-binding domain.

The protein belongs to the class-I aminoacyl-tRNA synthetase family. TyrS type 1 subfamily. As to quaternary structure, homodimer.

It localises to the cytoplasm. The catalysed reaction is tRNA(Tyr) + L-tyrosine + ATP = L-tyrosyl-tRNA(Tyr) + AMP + diphosphate + H(+). Catalyzes the attachment of tyrosine to tRNA(Tyr) in a two-step reaction: tyrosine is first activated by ATP to form Tyr-AMP and then transferred to the acceptor end of tRNA(Tyr). The chain is Tyrosine--tRNA ligase from Pelagibacter ubique (strain HTCC1062).